Here is a 475-residue protein sequence, read N- to C-terminus: Ankyrin repeat, SAM and basic leucine zipper domain-containing protein 1 (475 aa).

Residues 1-38 (MATGSLRGLAVAGGGESSDSEDDGWEIGYLDRPPQKLK) form a disordered region. A phosphoserine mark is found at serine 17, serine 18, and serine 20. ANK repeat units follow at residues 45 to 74 (EKNE…SVDS), 78 to 107 (YGWT…NASF), 110 to 144 (DKQT…DPNV), 148 to 177 (RLMT…EVNI), 181 to 210 (NGYT…NKTL), and 214 to 243 (DGKT…PLEG). One can recognise an SAM domain in the interval 272 to 334 (SYTAFGDLEI…KILAALKELE (63 aa)).

As to quaternary structure, interacts with DDX4, PIWIL1, RANBP9 and TDRD1.

Its subcellular location is the cytoplasm. Functionally, plays a central role during spermatogenesis by repressing transposable elements and preventing their mobilization, which is essential for the germline integrity. Acts via the piRNA metabolic process, which mediates the repression of transposable elements during meiosis by forming complexes composed of piRNAs and Piwi proteins and governs the methylation and subsequent repression of transposons. Its association with pi-bodies suggests a participation in the primary piRNAs metabolic process. Required prior to the pachytene stage to facilitate the production of multiple types of piRNAs, including those associated with repeats involved in the regulation of retrotransposons. May act by mediating protein-protein interactions during germ cell maturation. This is Ankyrin repeat, SAM and basic leucine zipper domain-containing protein 1 (ASZ1) from Oryctolagus cuniculus (Rabbit).